The primary structure comprises 394 residues: Cell division protein FtsZ (394 aa).

Residues 21–25 (GGGGN), 108–110 (GTG), glutamate 139, arginine 143, and aspartate 187 each bind GTP.

This sequence belongs to the FtsZ family. Homodimer. Polymerizes to form a dynamic ring structure in a strictly GTP-dependent manner. Interacts directly with several other division proteins.

The protein resides in the cytoplasm. Functionally, essential cell division protein that forms a contractile ring structure (Z ring) at the future cell division site. The regulation of the ring assembly controls the timing and the location of cell division. One of the functions of the FtsZ ring is to recruit other cell division proteins to the septum to produce a new cell wall between the dividing cells. Binds GTP and shows GTPase activity. In Azotobacter vinelandii, this protein is Cell division protein FtsZ.